Reading from the N-terminus, the 148-residue chain is Large-conductance mechanosensitive channel (148 aa).

Transmembrane regions (helical) follow at residues 21-41 (IDLA…DSVV), 45-65 (IMPL…KFLV), and 92-112 (GNFL…FIIV).

It belongs to the MscL family. In terms of assembly, homopentamer.

The protein resides in the cell inner membrane. Its function is as follows. Channel that opens in response to stretch forces in the membrane lipid bilayer. May participate in the regulation of osmotic pressure changes within the cell. The sequence is that of Large-conductance mechanosensitive channel from Bordetella petrii (strain ATCC BAA-461 / DSM 12804 / CCUG 43448).